A 228-amino-acid chain; its full sequence is 5'-methylthioadenosine/S-adenosylhomocysteine nucleosidase (228 aa).

The Proton acceptor role is filled by Glu11. Residues Gly77, Ile151, and 172 to 173 contribute to the substrate site; that span reads ME. Asp196 serves as the catalytic Proton donor.

Belongs to the PNP/UDP phosphorylase family. MtnN subfamily.

The catalysed reaction is S-adenosyl-L-homocysteine + H2O = S-(5-deoxy-D-ribos-5-yl)-L-homocysteine + adenine. The enzyme catalyses S-methyl-5'-thioadenosine + H2O = 5-(methylsulfanyl)-D-ribose + adenine. It catalyses the reaction 5'-deoxyadenosine + H2O = 5-deoxy-D-ribose + adenine. It participates in amino-acid biosynthesis; L-methionine biosynthesis via salvage pathway; S-methyl-5-thio-alpha-D-ribose 1-phosphate from S-methyl-5'-thioadenosine (hydrolase route): step 1/2. Its function is as follows. Catalyzes the irreversible cleavage of the glycosidic bond in both 5'-methylthioadenosine (MTA) and S-adenosylhomocysteine (SAH/AdoHcy) to adenine and the corresponding thioribose, 5'-methylthioribose and S-ribosylhomocysteine, respectively. Also cleaves 5'-deoxyadenosine, a toxic by-product of radical S-adenosylmethionine (SAM) enzymes, into 5-deoxyribose and adenine. This is 5'-methylthioadenosine/S-adenosylhomocysteine nucleosidase from Staphylococcus aureus (strain JH1).